The primary structure comprises 314 residues: Ribonuclease Z (314 aa).

Histidine 62, histidine 64, aspartate 66, histidine 67, histidine 139, aspartate 210, and histidine 268 together coordinate Zn(2+). Aspartate 66 serves as the catalytic Proton acceptor.

Belongs to the RNase Z family. In terms of assembly, homodimer. It depends on Zn(2+) as a cofactor.

The enzyme catalyses Endonucleolytic cleavage of RNA, removing extra 3' nucleotides from tRNA precursor, generating 3' termini of tRNAs. A 3'-hydroxy group is left at the tRNA terminus and a 5'-phosphoryl group is left at the trailer molecule.. Its function is as follows. Zinc phosphodiesterase, which displays some tRNA 3'-processing endonuclease activity. Probably involved in tRNA maturation, by removing a 3'-trailer from precursor tRNA. The sequence is that of Ribonuclease Z from Rippkaea orientalis (strain PCC 8801 / RF-1) (Cyanothece sp. (strain PCC 8801)).